Reading from the N-terminus, the 182-residue chain is Peptidyl-tRNA hydrolase (182 aa).

Residue Tyr-14 coordinates tRNA. The active-site Proton acceptor is His-19. Tyr-65, Asn-67, and Asn-113 together coordinate tRNA.

The protein belongs to the PTH family. As to quaternary structure, monomer.

It localises to the cytoplasm. The catalysed reaction is an N-acyl-L-alpha-aminoacyl-tRNA + H2O = an N-acyl-L-amino acid + a tRNA + H(+). Its function is as follows. Hydrolyzes ribosome-free peptidyl-tRNAs (with 1 or more amino acids incorporated), which drop off the ribosome during protein synthesis, or as a result of ribosome stalling. Catalyzes the release of premature peptidyl moieties from peptidyl-tRNA molecules trapped in stalled 50S ribosomal subunits, and thus maintains levels of free tRNAs and 50S ribosomes. This chain is Peptidyl-tRNA hydrolase, found in Rickettsia peacockii (strain Rustic).